The primary structure comprises 242 residues: Segregation and condensation protein A (242 aa).

This sequence belongs to the ScpA family. In terms of assembly, component of a cohesin-like complex composed of ScpA, ScpB and the Smc homodimer, in which ScpA and ScpB bind to the head domain of Smc. The presence of the three proteins is required for the association of the complex with DNA.

The protein resides in the cytoplasm. Its function is as follows. Participates in chromosomal partition during cell division. May act via the formation of a condensin-like complex containing Smc and ScpB that pull DNA away from mid-cell into both cell halves. This Streptococcus mitis protein is Segregation and condensation protein A.